Reading from the N-terminus, the 350-residue chain is Phenylalanine--tRNA ligase alpha subunit (350 aa).

Glu262 contributes to the Mg(2+) binding site.

This sequence belongs to the class-II aminoacyl-tRNA synthetase family. Phe-tRNA synthetase alpha subunit type 1 subfamily. In terms of assembly, tetramer of two alpha and two beta subunits. Requires Mg(2+) as cofactor.

It is found in the cytoplasm. It catalyses the reaction tRNA(Phe) + L-phenylalanine + ATP = L-phenylalanyl-tRNA(Phe) + AMP + diphosphate + H(+). This chain is Phenylalanine--tRNA ligase alpha subunit, found in Thermus thermophilus (strain ATCC BAA-163 / DSM 7039 / HB27).